A 178-amino-acid polypeptide reads, in one-letter code: Protamine-like protein (178 aa).

Disordered regions lie at residues 1–27 and 77–178; these read PSTT…TVSD and SVVK…RAKK. Basic residues-rich tracts occupy residues 8–21 and 94–178; these read SPKR…RKRT and PRRR…RAKK. Positions 21–89 constitute an H15 domain; it reads TGPTVSDLIL…KAKGFYKLNK (69 aa).

In terms of tissue distribution, male germ cells.

Its subcellular location is the nucleus. The protein localises to the chromosome. Functionally, replaces histones in the chromatin of sperm during the haploid phase of spermatogenesis. Compacts sperm DNA into a highly condensed, stable and inactive complex. The polypeptide is Protamine-like protein (Mullus surmuletus (Striped red mullet)).